Consider the following 302-residue polypeptide: ATP synthase gamma chain, sodium ion specific (302 aa).

The protein belongs to the ATPase gamma chain family. In terms of assembly, F-type ATPases have 2 components, CF(1) - the catalytic core - and CF(0) - the membrane proton channel. CF(1) has five subunits: alpha(3), beta(3), gamma(1), delta(1), epsilon(1). CF(0) has three main subunits: a, b and c.

It localises to the cell membrane. Its activity is regulated as follows. Inhibited by nitrate. Its function is as follows. Produces ATP from ADP in the presence of a proton gradient across the membrane. The gamma chain is believed to be important in regulating ATPase activity and the flow of protons through the CF(0) complex. The sequence is that of ATP synthase gamma chain, sodium ion specific (atpG) from Acetobacterium woodii (strain ATCC 29683 / DSM 1030 / JCM 2381 / KCTC 1655 / WB1).